The sequence spans 297 residues: Ribosomal RNA small subunit methyltransferase H (297 aa).

Residues 34–36 (AGH), D54, F88, D106, and Q113 contribute to the S-adenosyl-L-methionine site. Residues 272 to 297 (PLTAGEEETDRNPRARSAKLRAAEKK) are disordered.

Belongs to the methyltransferase superfamily. RsmH family.

The protein localises to the cytoplasm. It catalyses the reaction cytidine(1402) in 16S rRNA + S-adenosyl-L-methionine = N(4)-methylcytidine(1402) in 16S rRNA + S-adenosyl-L-homocysteine + H(+). Specifically methylates the N4 position of cytidine in position 1402 (C1402) of 16S rRNA. The chain is Ribosomal RNA small subunit methyltransferase H from Acidobacterium capsulatum (strain ATCC 51196 / DSM 11244 / BCRC 80197 / JCM 7670 / NBRC 15755 / NCIMB 13165 / 161).